We begin with the raw amino-acid sequence, 85 residues long: Large ribosomal subunit protein bL27 (85 aa).

A disordered region spans residues 1-21; that stretch reads MAHKKAGGSTRNGRDSNAKRL.

It belongs to the bacterial ribosomal protein bL27 family.

The chain is Large ribosomal subunit protein bL27 from Erwinia tasmaniensis (strain DSM 17950 / CFBP 7177 / CIP 109463 / NCPPB 4357 / Et1/99).